A 209-amino-acid polypeptide reads, in one-letter code: MEWKIDKDCVDYQMSLMFMQERVKQVINGSGDELVWMLQYEALYTGGTSADPQDLLNSDLFPVFNVGRGGKYTYHGPGQRVIYPILNLRSRNICDLHKYIYLLEEVVIVTLDNFGINGCRKEGHIGVWVGTGCQPPKKIAAIGVRVSKWVSYHGIAVNLYPDLSHYDAIIPCGIKNFGVTSAKEMGIEIRSFNAFDRYFKKSFVKIFGE.

One can recognise a BPL/LPL catalytic domain in the interval 29–209 (GSGDELVWML…KKSFVKIFGE (181 aa)). Residues 68–75 (RGGKYTYH), 141–143 (AIG), and 154–156 (GIA) each bind substrate. Cys172 (acyl-thioester intermediate) is an active-site residue.

The protein belongs to the LipB family.

It localises to the cytoplasm. It carries out the reaction octanoyl-[ACP] + L-lysyl-[protein] = N(6)-octanoyl-L-lysyl-[protein] + holo-[ACP] + H(+). It functions in the pathway protein modification; protein lipoylation via endogenous pathway; protein N(6)-(lipoyl)lysine from octanoyl-[acyl-carrier-protein]: step 1/2. Catalyzes the transfer of endogenously produced octanoic acid from octanoyl-acyl-carrier-protein onto the lipoyl domains of lipoate-dependent enzymes. Lipoyl-ACP can also act as a substrate although octanoyl-ACP is likely to be the physiological substrate. In Neorickettsia sennetsu (strain ATCC VR-367 / Miyayama) (Ehrlichia sennetsu), this protein is Octanoyltransferase.